Here is a 278-residue protein sequence, read N- to C-terminus: Undecaprenyl-diphosphatase (278 aa).

Transmembrane regions (helical) follow at residues 3-23 (YILI…IPIS), 42-62 (VAYS…IIYF), 88-108 (FLVI…LFVI), 112-132 (ILGL…IIIY), 152-172 (IIIV…RSGI), 190-210 (LSFI…VLFS), 225-245 (GLLI…NALL), and 253-273 (VVVL…LSGI).

It belongs to the UppP family.

It localises to the cell membrane. It carries out the reaction di-trans,octa-cis-undecaprenyl diphosphate + H2O = di-trans,octa-cis-undecaprenyl phosphate + phosphate + H(+). Catalyzes the dephosphorylation of undecaprenyl diphosphate (UPP). This Saccharolobus islandicus (strain M.14.25 / Kamchatka #1) (Sulfolobus islandicus) protein is Undecaprenyl-diphosphatase.